The primary structure comprises 1159 residues: CRISPR-associated endoribonuclease Cas13a (1159 aa).

Residues Met1–His11 form a binds crRNA repeat and spacer region. The interval Met1–Ser170 is NTD. Binds crRNA repeat stretches follow at residues Asn139–Asn151, Arg172–Tyr176, Arg224–Arg233, Gln271–Tyr276, His294–Glu297, and Ser301–Lys305. The helical-1 stretch occupies residues Lys171–Ile360. A binds crRNA processing site region spans residues Lys319–Asn328. 2 binds crRNA repeat regions span residues Lys336–Lys340 and Gln371–Asn378. The interval Ala361–Asn508 is HEPN-like fold 1-I. Catalysis depends on for target RNA cleavage residues Arg472 and His477. The tract at residues Glu509–Asn751 is helical-2. Residues Gln519 to Ser522 form a binds target RNA region. The binds crRNA spacer stretch occupies residues Asn547–Lys558. Residues Asp590–Lys597 are binds target RNA. Residues Lys718–Asp722 form a binds crRNA spacer region. Residues Ile752–Asp813 form an HEPN-like fold 1-II region. The segment at Ser780–Lys783 is binds crRNA repeat. The interval Asn804–Val810 is binds crRNA spacer and target RNA. The segment at Phe814 to Glu946 is linker. 2 binds crRNA spacer regions span residues Lys845–Arg857 and Tyr938–Lys942. Residues Tyr880–Glu946 adopt a coiled-coil conformation. Positions Phe947 to Asn1159 are HEPN-like fold 2. Residues His962–Arg963 form a binds crRNA repeat region. Residues Phe995–Lys998 are binds 3'-end of target RNA, in adjacent protein. Catalysis depends on for target RNA cleavage residues Arg1048 and His1053. Binds crRNA processing site stretches follow at residues Arg1072–Lys1082 and Ile1104–Lys1108.

The protein belongs to the CRISPR-associated endoribonuclease Cas13a family. Crystals show the 3'-end of target RNA interacting with an adjacent protein molecule, and mutagenesis of those amino acid residues decreases target RNA cleavage, but it is not clear if this is physiological. A divalent metal cation serves as cofactor.

Its activity is regulated as follows. Target RNA acts as an activator for non-specific ssRNA cleavage; the target RNA and complementary crRNA must both be at least 20 nucleotides long to activate the HEPN-like catalytic pocket for RNase activity. Its function is as follows. CRISPR (clustered regularly interspaced short palindromic repeat), is an adaptive immune system that provides protection against mobile genetic elements (viruses, transposable elements and conjugative plasmids). CRISPR clusters contain sequences complementary to antecedent mobile elements (spacer sequences) and target invading nucleic acids. Unlike many single-component effectors, this CRISPR-Cas system targets RNA. CRISPR clusters are transcribed from pre-CRISPR RNA (crRNA) and processed into crRNA by this protein. pre-crRNA processing yields a 5'-OH and probably a 2',3'-cyclic phosphate. Also cleaves pre-crRNA from several other type VI-A CRISPR systems. Cleaves linear target ssRNA in a crRNA-dependent fashion, preferentially before U residues. Cleavage of target ssRNA is about 80-fold faster than pre-crRNA processing and uses a different active site. Binding a viable target RNA target activates this protein for non-specific RNA degradation in vitro (called collateral RNA degradation). Activation occurs with 10 fM target RNA. crRNA maturation is not essential for activation of RNA degradation, but lack of mature crRNA (due to mutagenesis) decreases activation levels. This system has a 3' protospacer flanking site in the target RNA (PFS), which is C and unavailable to base pair with crRNA (PFS is equivalent to PAM, the protospacer adjacent motif). The sequence is that of CRISPR-associated endoribonuclease Cas13a from Leptotrichia buccalis (strain ATCC 14201 / DSM 1135 / JCM 12969 / NCTC 10249 / C-1013-b).